Reading from the N-terminus, the 263-residue chain is Protein PUN1 (263 aa).

The Cytoplasmic portion of the chain corresponds to 1 to 6 (MRNFFT). The chain crosses the membrane as a helical span at residues 7 to 27 (LFFAAIFSLGALILAIVACAG). Residues 28 to 143 (STKNYSPINK…MTYYNNLVKC (116 aa)) are Extracellular-facing. Residue Asn-100 is glycosylated (N-linked (GlcNAc...) asparagine). The chain crosses the membrane as a helical span at residues 144–164 (MFITILIGIVLTFVNLVFNVL). Residues 165–172 (RWIIHIRP) lie on the Cytoplasmic side of the membrane. Residues 173-193 (LTWFGAFFSFFAFAALLVSIG) form a helical membrane-spanning segment. At 194–223 (SCLGTYSYIKYILKHNYSDYGISMSIGRNY) the chain is on the extracellular side. Asn-209 carries an N-linked (GlcNAc...) asparagine glycan. Residues 224–244 (QGLMWGAVVGALLNFILWCSV) traverse the membrane as a helical segment. Topologically, residues 245–263 (RSRPTVIYANAPIEEKPLI) are cytoplasmic. A Glycyl lysine isopeptide (Lys-Gly) (interchain with G-Cter in ubiquitin) cross-link involves residue Lys-260.

It belongs to the SUR7 family. Post-translationally, N-glycosylated.

The protein localises to the cell membrane. Functionally, contributes to the wild-type cellular response to nitrogen stress through signaling pathways that regulate the expression of genes involved in amino acid biosynthesis. Required for wild-type filamentous growth, cell growth, and cell-cell adhesion. This chain is Protein PUN1 (PUN1), found in Saccharomyces cerevisiae (strain ATCC 204508 / S288c) (Baker's yeast).